A 243-amino-acid polypeptide reads, in one-letter code: tRNA pseudouridine synthase A (243 aa).

Asp54 (nucleophile) is an active-site residue. Residue Tyr112 coordinates substrate.

It belongs to the tRNA pseudouridine synthase TruA family. Homodimer.

It catalyses the reaction uridine(38/39/40) in tRNA = pseudouridine(38/39/40) in tRNA. In terms of biological role, formation of pseudouridine at positions 38, 39 and 40 in the anticodon stem and loop of transfer RNAs. The polypeptide is tRNA pseudouridine synthase A (Aster yellows witches'-broom phytoplasma (strain AYWB)).